Consider the following 165-residue polypeptide: uncharacterized protein (165 aa).

The next 5 helical transmembrane spans lie at 30–50 (GWEL…AAGG), 65–85 (GMVW…VSGL), 86–106 (SAFW…VWQG), 108–128 (FWLL…FASG), and 131–151 (WTVT…SEYG).

It to E.coli YcdZ.

Its subcellular location is the cell membrane. This is an uncharacterized protein from Escherichia coli (strain K12).